The chain runs to 348 residues: Histidinol-phosphate aminotransferase (348 aa).

Lysine 210 is subject to N6-(pyridoxal phosphate)lysine.

The protein belongs to the class-II pyridoxal-phosphate-dependent aminotransferase family. Histidinol-phosphate aminotransferase subfamily. In terms of assembly, homodimer. The cofactor is pyridoxal 5'-phosphate.

The catalysed reaction is L-histidinol phosphate + 2-oxoglutarate = 3-(imidazol-4-yl)-2-oxopropyl phosphate + L-glutamate. It functions in the pathway amino-acid biosynthesis; L-histidine biosynthesis; L-histidine from 5-phospho-alpha-D-ribose 1-diphosphate: step 7/9. The chain is Histidinol-phosphate aminotransferase from Pseudomonas putida (strain W619).